The following is a 336-amino-acid chain: Phosphate acyltransferase (336 aa).

It belongs to the PlsX family. In terms of assembly, homodimer. Probably interacts with PlsY.

It localises to the cytoplasm. It catalyses the reaction a fatty acyl-[ACP] + phosphate = an acyl phosphate + holo-[ACP]. Its pathway is lipid metabolism; phospholipid metabolism. Functionally, catalyzes the reversible formation of acyl-phosphate (acyl-PO(4)) from acyl-[acyl-carrier-protein] (acyl-ACP). This enzyme utilizes acyl-ACP as fatty acyl donor, but not acyl-CoA. The protein is Phosphate acyltransferase of Pseudomonas paraeruginosa (strain DSM 24068 / PA7) (Pseudomonas aeruginosa (strain PA7)).